Here is a 418-residue protein sequence, read N- to C-terminus: MNPIQSFHCKLRSLATVLDGETARLLRALDGEDSDFEDSSARILCDLYSEVQTLKDDVNAHLDKARLESRESTHFIKAAKVLMKKNSADIIKLREFFQKYGYQARDKEDSACEHRVSNSSPGLAVCKDTQEPGVKQELSEPRVPRGSAPEEPLRSPQLSDFGLQRYMVSQGPANPRQETVSLKEDRASETTPAKDPSVQVLKTPRCALKMDDFECVTPKLEHFGISEYTMCLNEDYTMGLKNMKSIKSSPLSGVGGEAVETGPVTSDNSFAIPGPMIQQLEKNDVEYINSPLPPKFCTPGLKIPSSMDSTDLVSIDYPLSKPNSSPTDLEDKDCAPLILNSDECYQSFADPHSPTITSYENFTTPSPPKVTAIPEDILQMLKYNSNLASPIDVKAMPLRRGFTSKGQSTRGAANKENW.

Phosphoserine is present on residues serine 34, serine 119, serine 120, serine 139, serine 155, and serine 159. The tract at residues 102-417 is binds the NDC80 complex; it reads YQARDKEDSA…STRGAANKEN (316 aa). The segment at 111–157 is disordered; that stretch reads ACEHRVSNSSPGLAVCKDTQEPGVKQELSEPRVPRGSAPEEPLRSPQ. The interval 170–198 is disordered; the sequence is QGPANPRQETVSLKEDRASETTPAKDPSV. Residues threonine 190 and threonine 217 each carry the phosphothreonine modification. Residues 196 to 417 are binds microtubules and contacts the microtubule-binding domain of SKA1; that stretch reads PSVQVLKTPR…STRGAANKEN (222 aa). Position 290 is a phosphoserine (serine 290). Threonine 298 bears the Phosphothreonine mark. Residues serine 325 and serine 353 each carry the phosphoserine modification. The segment at 350–417 is required for localization to kinetochores; that stretch reads DPHSPTITSY…STRGAANKEN (68 aa). Threonine 364 carries the phosphothreonine modification.

This sequence belongs to the SKA3 family. Component of the SKA complex, composed of SKA1, SKA2 and SKA3. The SKA complex is a homodimer organized around a central W-shaped coiled-coil structure, formed by the interacting domains of SKA1, SKA2, and SKA3, each end of the 'W' is extended further by the C-terminal microtubule-binding domains of SKA1 and SKA3; the complex forms extended structures on microtubules. Interacts with the NDC80-NUF2 heterodimer of the NDC80 complex (via coiled coils); the interaction localizes the SKA complex to the kinetochore and is required to establish kinetochore-microtubule end-on attachments. Interacts with polo-like kinase PLK1.

It is found in the cytoplasm. The protein localises to the cytoskeleton. Its subcellular location is the spindle. It localises to the chromosome. The protein resides in the centromere. It is found in the kinetochore. The protein localises to the microtubule organizing center. Its subcellular location is the centrosome. Its function is as follows. Component of the SKA complex, a microtubule plus end-binding complex of the outer kinetochore that stabilizes spindle microtubule-kinetochore attachments, promotes alignment of chromosomes at the mitotic spindle equator (chromosome congression) and assists suppression of the spindle assembly checkpoint. Kinetochores, consisting of a centromere-associated inner segment and a microtubule-contacting outer segment, play a crucial role in chromosome segregation by mediating the physical connection between centromeric DNA and spindle microtubules. The outer kinetochore is made up of the ten-subunit KMN network complex, comprising the MIS12, NDC80 and KNL1 complexes, and auxiliary microtubule-associated components such as the SKA complex; together they connect the outer kinetochore with the inner kinetochore, bind microtubules, and mediate interactions with mitotic checkpoint proteins that delay anaphase until chromosomes are bioriented on the spindle. The SKA complex is loaded onto bioriented kinetochores and it facilitates chromosome congression by stabilizing microtubules together with MAPRE1, and end-on attachment of the NDC80 complex to depolymerizing spindle microtubules, thereby assisting the poleward-moving kinetochore in withstanding microtubule pulling forces. The complex associates with dynamic microtubule plus-ends and can track both depolymerizing and elongating microtubules. The complex recruits protein phosphatase 1 (PP1) to the kinetochore in prometaphase and metaphase, to oppose spindle assembly checkpoint signaling and promote the onset of anaphase. Within the complex, binds microtubules but with a much lower affinity than SKA1. Promotes stability of the polo-like kinase PLK1 protein. During meiosis the SKA complex stabilizes the meiotic spindle and is required for its migration to the cortex. The polypeptide is SKA complex subunit 3 (Ska3) (Rattus norvegicus (Rat)).